A 206-amino-acid polypeptide reads, in one-letter code: GTP cyclohydrolase 1 (206 aa).

Positions 98, 101, and 169 each coordinate Zn(2+).

This sequence belongs to the GTP cyclohydrolase I family. In terms of assembly, toroid-shaped homodecamer, composed of two pentamers of five dimers.

It catalyses the reaction GTP + H2O = 7,8-dihydroneopterin 3'-triphosphate + formate + H(+). It functions in the pathway cofactor biosynthesis; 7,8-dihydroneopterin triphosphate biosynthesis; 7,8-dihydroneopterin triphosphate from GTP: step 1/1. In Helicobacter hepaticus (strain ATCC 51449 / 3B1), this protein is GTP cyclohydrolase 1.